The following is a 721-amino-acid chain: Catalase-peroxidase 1 (721 aa).

Residues 98 to 223 constitute a cross-link (tryptophyl-tyrosyl-methioninium (Trp-Tyr) (with M-249)); it reads WHAAGSYRVA…LAAVQMGLIY (126 aa). H99 acts as the Proton acceptor in catalysis. The tryptophyl-tyrosyl-methioninium (Tyr-Met) (with W-98) cross-link spans 223–249; that stretch reads YVNPEGVNGQPDPLRTAQDVRVTFGRM. H264 contacts heme b.

Belongs to the peroxidase family. Peroxidase/catalase subfamily. Homodimer or homotetramer. It depends on heme b as a cofactor. In terms of processing, formation of the three residue Trp-Tyr-Met cross-link is important for the catalase, but not the peroxidase activity of the enzyme.

The enzyme catalyses H2O2 + AH2 = A + 2 H2O. It catalyses the reaction 2 H2O2 = O2 + 2 H2O. Functionally, bifunctional enzyme with both catalase and broad-spectrum peroxidase activity. The sequence is that of Catalase-peroxidase 1 from Legionella pneumophila (strain Corby).